We begin with the raw amino-acid sequence, 330 residues long: Malate dehydrogenase (330 aa).

12–18 (GAAGQIG) lines the NAD(+) pocket. Substrate-binding residues include Arg93 and Arg99. Residues Asn106, Gln113, and 130–132 (VGN) contribute to the NAD(+) site. Substrate-binding residues include Asn132 and Arg163. The active-site Proton acceptor is His188.

This sequence belongs to the LDH/MDH superfamily. MDH type 2 family.

It carries out the reaction (S)-malate + NAD(+) = oxaloacetate + NADH + H(+). In terms of biological role, catalyzes the reversible oxidation of malate to oxaloacetate. The protein is Malate dehydrogenase of Thermobifida fusca (strain YX).